The chain runs to 321 residues: Lipoyl synthase (321 aa).

[4Fe-4S] cluster-binding residues include Cys68, Cys73, Cys79, Cys94, Cys98, Cys101, and Ser308. The 218-residue stretch at 80–297 folds into the Radical SAM core domain; it reads FNHGTATFMI…KEVALELGFT (218 aa).

This sequence belongs to the radical SAM superfamily. Lipoyl synthase family. The cofactor is [4Fe-4S] cluster.

Its subcellular location is the cytoplasm. It carries out the reaction [[Fe-S] cluster scaffold protein carrying a second [4Fe-4S](2+) cluster] + N(6)-octanoyl-L-lysyl-[protein] + 2 oxidized [2Fe-2S]-[ferredoxin] + 2 S-adenosyl-L-methionine + 4 H(+) = [[Fe-S] cluster scaffold protein] + N(6)-[(R)-dihydrolipoyl]-L-lysyl-[protein] + 4 Fe(3+) + 2 hydrogen sulfide + 2 5'-deoxyadenosine + 2 L-methionine + 2 reduced [2Fe-2S]-[ferredoxin]. Its pathway is protein modification; protein lipoylation via endogenous pathway; protein N(6)-(lipoyl)lysine from octanoyl-[acyl-carrier-protein]: step 2/2. In terms of biological role, catalyzes the radical-mediated insertion of two sulfur atoms into the C-6 and C-8 positions of the octanoyl moiety bound to the lipoyl domains of lipoate-dependent enzymes, thereby converting the octanoylated domains into lipoylated derivatives. This Vibrio cholerae serotype O1 (strain ATCC 39315 / El Tor Inaba N16961) protein is Lipoyl synthase.